The primary structure comprises 176 residues: Cytochrome b (176 aa).

The next 3 membrane-spanning stretches (helical) occupy residues 33 to 53, 77 to 98, and 113 to 133; these read FGSLLGVCLIVQILTGLFLAM, WLLRYLHANGASMFFICLYLHI, and WNVGVILLFAVMATAFMGYVL. H83 and H97 together coordinate heme b.

Belongs to the cytochrome b family. In terms of assembly, the cytochrome bc1 complex contains 11 subunits: 3 respiratory subunits (MT-CYB, CYC1 and UQCRFS1), 2 core proteins (UQCRC1 and UQCRC2) and 6 low-molecular weight proteins (UQCRH/QCR6, UQCRB/QCR7, UQCRQ/QCR8, UQCR10/QCR9, UQCR11/QCR10 and a cleavage product of UQCRFS1). This cytochrome bc1 complex then forms a dimer. Heme b is required as a cofactor.

It localises to the mitochondrion inner membrane. In terms of biological role, component of the ubiquinol-cytochrome c reductase complex (complex III or cytochrome b-c1 complex) that is part of the mitochondrial respiratory chain. The b-c1 complex mediates electron transfer from ubiquinol to cytochrome c. Contributes to the generation of a proton gradient across the mitochondrial membrane that is then used for ATP synthesis. The protein is Cytochrome b (MT-CYB) of Nyctinomops aurispinosus (Peale's free-tailed bat).